Reading from the N-terminus, the 86-residue chain is Putative membrane protein insertion efficiency factor (86 aa).

Belongs to the UPF0161 family.

It localises to the cell inner membrane. In terms of biological role, could be involved in insertion of integral membrane proteins into the membrane. This Ruegeria sp. (strain TM1040) (Silicibacter sp.) protein is Putative membrane protein insertion efficiency factor.